The sequence spans 338 residues: Protein mono-ADP-ribosyltransferase PARP11 (338 aa).

Residue glutamate 13 is modified to ADP-ribosyl glutamic acid. Lysine 18 carries the post-translational modification N6-(ADP-ribosyl)lysine. A WWE domain is found at 22-106; that stretch reads NEVDDMDTSD…TTGKQRLIKR (85 aa). ADP-ribosylcysteine is present on residues cysteine 56 and cysteine 72. Aspartate 87 is subject to ADP-ribosyl aspartic acid. Residues 123–338 form the PARP catalytic domain; sequence IPMPPHWENV…IYPEYLIDFH (216 aa).

The protein belongs to the ARTD/PARP family. As to quaternary structure, interacts with PARP12; this interaction plays a role in zika virus suppression. Auto-mono-ADP-ribosylated.

It is found in the nucleus. Its subcellular location is the nuclear pore complex. The catalysed reaction is L-aspartyl-[protein] + NAD(+) = 4-O-(ADP-D-ribosyl)-L-aspartyl-[protein] + nicotinamide. The enzyme catalyses L-cysteinyl-[protein] + NAD(+) = S-(ADP-D-ribosyl)-L-cysteinyl-[protein] + nicotinamide + H(+). It catalyses the reaction L-glutamyl-[protein] + NAD(+) = 5-O-(ADP-D-ribosyl)-L-glutamyl-[protein] + nicotinamide. It carries out the reaction L-lysyl-[protein] + NAD(+) = N(6)-(ADP-D-ribosyl)-L-lysyl-[protein] + nicotinamide + H(+). Mono-ADP-ribosyltransferase that mediates mono-ADP-ribosylation of target proteins. Plays a role in nuclear envelope stability and nuclear remodeling during spermiogenesis. Inhibits the type I interferon activated signaling pathway. Mechanistically, mono-ADP-ribosylates beta-TrCP/BTRC to promote IFNAR1 ubiquitination and protect BTRC from ubiquitin-proteasome degradation. Additionally, acts as an antiviral factor by cooperating with PARP12 to suppress Zika virus replication, independent of IFNAR1 regulation or intrinsic PARP enzymatic activity. Instead, facilitates the degradation of viral NS1 and NS3 proteins, potentially disrupting viral replication. The sequence is that of Protein mono-ADP-ribosyltransferase PARP11 from Homo sapiens (Human).